The sequence spans 460 residues: MGTIHLFRKSQRSLVGKLTHEFRLVAADRRSWKILLFGAINLICIGFLLMWCSSTNSIALTAYTYLTIFDLFSLITCLISYWVMVKKPSPVYSFGFERFEVLAVFASTVLAQLGALFILKESAERFLEQPEIHTGRLLVGTFVALFFNLFTMLSVRNKPFAYVSEAASTSWLQEHVADLSRSICGIIPGLSSIFLPRMNPFVLIDIAGALALCITYMLIEINNYYAVDTASAIAIALMTFGTMYPMSVYSGKVLLQTTPPHVFGQLDKLLREVSTLDGVLEVRNEHFWTLGFGTLAGSVHVRIRRDANEQMVLAHVTNRLYTLVSTLTVQIFKDDWIRPTLSSVPIANNMLNLSDHHVITMPSLKAADNLNPVTSTPAKPSSPPPEFSFNTPGKNVNPVILLNTQTRPYGLGLNHGSTPYSSVLNQGFGIPGMGATQGFRTGFTNVPSRYGTNTRGQSRP.

The Cytoplasmic portion of the chain corresponds to 1-33; sequence MGTIHLFRKSQRSLVGKLTHEFRLVAADRRSWK. A helical membrane pass occupies residues 34 to 54; it reads ILLFGAINLICIGFLLMWCSS. Over 55–64 the chain is Extracellular; that stretch reads TNSIALTAYT. The chain crosses the membrane as a helical span at residues 65 to 85; that stretch reads YLTIFDLFSLITCLISYWVMV. Over 86-98 the chain is Cytoplasmic; it reads KKPSPVYSFGFER. The chain crosses the membrane as a helical span at residues 99 to 119; that stretch reads FEVLAVFASTVLAQLGALFIL. The Extracellular portion of the chain corresponds to 120 to 134; that stretch reads KESAERFLEQPEIHT. The helical transmembrane segment at 135-155 threads the bilayer; sequence GRLLVGTFVALFFNLFTMLSV. Topologically, residues 156–200 are cytoplasmic; sequence RNKPFAYVSEAASTSWLQEHVADLSRSICGIIPGLSSIFLPRMNP. Residues 201–221 traverse the membrane as a helical segment; it reads FVLIDIAGALALCITYMLIEI. Residues 222–228 lie on the Extracellular side of the membrane; that stretch reads NNYYAVD. Residues 229–249 form a helical membrane-spanning segment; sequence TASAIAIALMTFGTMYPMSVY. At 250 to 460 the chain is on the cytoplasmic side; sequence SGKVLLQTTP…GTNTRGQSRP (211 aa). The disordered stretch occupies residues 372–392; the sequence is PVTSTPAKPSSPPPEFSFNTP.

This sequence belongs to the cation diffusion facilitator (CDF) transporter (TC 2.A.4) family. SLC30A subfamily. As to quaternary structure, heterodimer with SLC30A5; form a functional zinc ion transmembrane transporter.

The protein localises to the golgi apparatus. It localises to the trans-Golgi network membrane. In terms of biological role, has probably no intrinsic transporter activity but together with SLC30A5 forms a functional zinc ion:proton antiporter heterodimer, mediating zinc entry into the lumen of organelles along the secretory pathway. As part of that zinc ion:proton antiporter, contributes to zinc ion homeostasis within the early secretory pathway and regulates the activation and folding of enzymes like alkaline phosphatases and enzymes involved in phosphatidylinositol glycan anchor biosynthesis. The chain is Zinc transporter 6 (SLC30A6) from Gallus gallus (Chicken).